The sequence spans 93 residues: Small ribosomal subunit protein uS19 (93 aa).

Disordered stretches follow at residues 1 to 24 (MPRSLKKGPFVDDHLQKKVDAQNE) and 73 to 93 (EFAPTRTFKGHEKDDRKGRRR). 2 stretches are compositionally biased toward basic and acidic residues: residues 9–21 (PFVDDHLQKKVDA) and 81–93 (KGHEKDDRKGRRR).

The protein belongs to the universal ribosomal protein uS19 family.

Functionally, protein S19 forms a complex with S13 that binds strongly to the 16S ribosomal RNA. The sequence is that of Small ribosomal subunit protein uS19 from Kineococcus radiotolerans (strain ATCC BAA-149 / DSM 14245 / SRS30216).